The following is a 348-amino-acid chain: D-alanine--D-alanine ligase (348 aa).

The region spanning 132 to 334 is the ATP-grasp domain; the sequence is KRILEVAGVP…YSDIIKELVV (203 aa). 162-217 serves as a coordination point for ATP; sequence LEKLTFPVFVKPANMGSSVGISKAENESELRSAIDLALKYDSRILIEQGVVAREIE. 3 residues coordinate Mg(2+): Asp288, Glu301, and Asn303.

The protein belongs to the D-alanine--D-alanine ligase family. The cofactor is Mg(2+). Mn(2+) is required as a cofactor.

Its subcellular location is the cytoplasm. It catalyses the reaction 2 D-alanine + ATP = D-alanyl-D-alanine + ADP + phosphate + H(+). It participates in cell wall biogenesis; peptidoglycan biosynthesis. Functionally, cell wall formation. The chain is D-alanine--D-alanine ligase from Streptococcus thermophilus (strain CNRZ 1066).